The sequence spans 65 residues: Large ribosomal subunit protein uL29 (65 aa).

Belongs to the universal ribosomal protein uL29 family.

This Xylella fastidiosa (strain 9a5c) protein is Large ribosomal subunit protein uL29 (rpmC).